Here is a 253-residue protein sequence, read N- to C-terminus: Aspartate/glutamate leucyltransferase (253 aa).

The protein belongs to the R-transferase family. Bpt subfamily.

The protein localises to the cytoplasm. The enzyme catalyses N-terminal L-glutamyl-[protein] + L-leucyl-tRNA(Leu) = N-terminal L-leucyl-L-glutamyl-[protein] + tRNA(Leu) + H(+). The catalysed reaction is N-terminal L-aspartyl-[protein] + L-leucyl-tRNA(Leu) = N-terminal L-leucyl-L-aspartyl-[protein] + tRNA(Leu) + H(+). Functionally, functions in the N-end rule pathway of protein degradation where it conjugates Leu from its aminoacyl-tRNA to the N-termini of proteins containing an N-terminal aspartate or glutamate. This Allorhizobium ampelinum (strain ATCC BAA-846 / DSM 112012 / S4) (Agrobacterium vitis (strain S4)) protein is Aspartate/glutamate leucyltransferase.